Reading from the N-terminus, the 460-residue chain is tRNA (guanine(10)-N(2))-methyltransferase TRMT11 (460 aa).

An N-acetylalanine modification is found at Ala2.

Belongs to the class I-like SAM-binding methyltransferase superfamily. TRM11 methyltransferase family. In terms of assembly, part of the heterodimeric TRMT11-TRM112 methyltransferase complex; this complex forms an active tRNA methyltransferase, where TRMT112 acts as an activator of the catalytic subunit TRMT11.

Its subcellular location is the cytoplasm. The enzyme catalyses guanosine(10) in tRNA + S-adenosyl-L-methionine = N(2)-methylguanosine(10) in tRNA + S-adenosyl-L-homocysteine + H(+). Functionally, catalytic subunit of the TRMT11-TRM112 methyltransferase complex, that specifically mediates the S-adenosyl-L-methionine-dependent N(2)-methylation of guanosine nucleotide at position 10 (m2G10) in tRNAs. This is one of the major tRNA (guanine-N(2))-methyltransferases. The protein is tRNA (guanine(10)-N(2))-methyltransferase TRMT11 of Mus musculus (Mouse).